The sequence spans 450 residues: Neuronal acetylcholine receptor subunit alpha-10 (450 aa).

The N-terminal stretch at 1 to 24 (MGLRSHHLSLGLLLLFLLPAECLG) is a signal peptide. At 25–237 (AEGRLALKLF…FTLLLRRRAA (213 aa)) the chain is on the extracellular side. N-linked (GlcNAc...) asparagine glycosylation is found at Asn40 and Asn56. Intrachain disulfides connect Cys154-Cys168 and Cys218-Cys219. Helical transmembrane passes span 238–258 (AYVC…PLAF), 268–288 (VSLG…LAES), and 302–322 (YMAT…IMNL). The Cytoplasmic segment spans residues 323–428 (HYCGPSVRPV…WKRLARVMDR (106 aa)). The disordered stretch occupies residues 355 to 380 (EPCGQSRPPELSPSPQSPEGGAGPPA). Residues 429–449 (FFLAIFFSMALVMSLLVLVQA) form a helical membrane-spanning segment.

It belongs to the ligand-gated ion channel (TC 1.A.9) family. Acetylcholine receptor (TC 1.A.9.1) subfamily. Alpha-10/CHRNA10 sub-subfamily. In terms of assembly, forms homo- or heterooligomeric channels in conjunction with CHRNA10. The native outer hair cell receptor may be composed of CHRNA9:CHRNA10 heterooligomers. Found in the stoichiometric form (CHRNA9)2:(CHRNA10)3. As to expression, expressed in inner-ear tissue, tonsil, immortalized B-cells, cultured T-cells and peripheral blood lymphocytes.

The protein localises to the synaptic cell membrane. The protein resides in the cell membrane. The enzyme catalyses Ca(2+)(in) = Ca(2+)(out). It catalyses the reaction K(+)(in) = K(+)(out). The catalysed reaction is Na(+)(in) = Na(+)(out). It carries out the reaction Mg(2+)(in) = Mg(2+)(out). Activated by a myriad of ligands such as acetylcholine. AChR activity is inhibited by the antagonists alpha-conotoxins RgIA and GeXXA, small disulfide-constrained peptides from cone snails. Functionally, component of neuronal acetylcholine receptors (nAChRs) that function as pentameric, ligand-gated cation channels with high calcium permeability. nAChRs are excitatory neurotrasnmitter receptors formed by a collection of nAChR subunits. Each nAchR subunit confers differential attributes to channel properties, including activation, deactivation and desensitization kinetics, pH sensitivity, cation permeability, and binding to allosteric modulators. Forms heteropentamers with CHRNA9. Expressed in the inner ear, in sympathetic neurons and in other non-neuronal cells, such as skin keratinocytes and lymphocytes. nAChR formed by CHRNA9:CHRNA10 is involved in modulation of auditory stimuli. The channel is permeable to a range of divalent cations including calcium, the influx of which may activate a potassium current which hyperpolarizes the cell membrane. In the ear, mediates synaptic transmission between efferent olivocochlear fibers and hair cells of the cochlea, this may lead to a reduction in basilar membrane motion, altering the activity of auditory nerve fibers and reducing the range of dynamic hearing. This may protect against acoustic trauma. May also regulate keratinocyte adhesion. This chain is Neuronal acetylcholine receptor subunit alpha-10, found in Homo sapiens (Human).